Here is a 131-residue protein sequence, read N- to C-terminus: NADPH-dependent 7-cyano-7-deazaguanine reductase (131 aa).

C47 serves as the catalytic Thioimide intermediate. D54 (proton donor) is an active-site residue. Substrate-binding positions include 69–71 and 88–89; these read MEL and HE.

It belongs to the GTP cyclohydrolase I family. QueF type 1 subfamily.

It is found in the cytoplasm. The enzyme catalyses 7-aminomethyl-7-carbaguanine + 2 NADP(+) = 7-cyano-7-deazaguanine + 2 NADPH + 3 H(+). Its pathway is tRNA modification; tRNA-queuosine biosynthesis. Catalyzes the NADPH-dependent reduction of 7-cyano-7-deazaguanine (preQ0) to 7-aminomethyl-7-deazaguanine (preQ1). In Microcystis aeruginosa (strain NIES-843 / IAM M-2473), this protein is NADPH-dependent 7-cyano-7-deazaguanine reductase.